A 426-amino-acid polypeptide reads, in one-letter code: UPF0164 protein TP_0548 (426 aa).

The first 37 residues, 1–37 (MISCSVRRRPRWEPQVGAAFLAFALLPVLASGRGMQA), serve as a signal peptide directing secretion.

The protein belongs to the UPF0164 family.

This Treponema pallidum (strain Nichols) protein is UPF0164 protein TP_0548.